The following is a 541-amino-acid chain: Chaperonin GroEL (541 aa).

ATP is bound by residues 29-32 (TLGP), 86-90 (DGTTT), glycine 413, 476-478 (NAA), and aspartate 492.

Belongs to the chaperonin (HSP60) family. As to quaternary structure, forms a cylinder of 14 subunits composed of two heptameric rings stacked back-to-back. Interacts with the co-chaperonin GroES.

Its subcellular location is the cytoplasm. The enzyme catalyses ATP + H2O + a folded polypeptide = ADP + phosphate + an unfolded polypeptide.. Functionally, together with its co-chaperonin GroES, plays an essential role in assisting protein folding. The GroEL-GroES system forms a nano-cage that allows encapsulation of the non-native substrate proteins and provides a physical environment optimized to promote and accelerate protein folding. This chain is Chaperonin GroEL, found in Streptococcus equi subsp. zooepidemicus (strain H70).